The primary structure comprises 410 residues: 2-oxoglutarate-dependent dioxygenase AOP3 (410 aa).

Residues 258–355 (GNASVGAKEA…RYAAALFSNP (98 aa)) form the Fe2OG dioxygenase domain. Fe cation contacts are provided by His-278, Asp-280, and His-335. A 2-oxoglutarate-binding site is contributed by Arg-346.

The protein belongs to the iron/ascorbate-dependent oxidoreductase family. The cofactor is Fe(2+).

Functionally, 2-oxoglutarate-dependent dioxygenase involved in glucosinolates biosynthesis. Catalyzes the conversion of methylsulfinylalkyl glucosinolates to hydroxyalkyl glucosinolates. In Arabidopsis thaliana (Mouse-ear cress), this protein is 2-oxoglutarate-dependent dioxygenase AOP3 (AOP3).